Reading from the N-terminus, the 328-residue chain is Lipoyl synthase (328 aa).

Residues Cys56, Cys61, Cys67, Cys82, Cys86, Cys89, and Ser298 each contribute to the [4Fe-4S] cluster site. A Radical SAM core domain is found at 68–287; sequence WEDREATFLI…KEEAEEIGFS (220 aa).

Belongs to the radical SAM superfamily. Lipoyl synthase family. [4Fe-4S] cluster serves as cofactor.

The protein localises to the cytoplasm. The enzyme catalyses [[Fe-S] cluster scaffold protein carrying a second [4Fe-4S](2+) cluster] + N(6)-octanoyl-L-lysyl-[protein] + 2 oxidized [2Fe-2S]-[ferredoxin] + 2 S-adenosyl-L-methionine + 4 H(+) = [[Fe-S] cluster scaffold protein] + N(6)-[(R)-dihydrolipoyl]-L-lysyl-[protein] + 4 Fe(3+) + 2 hydrogen sulfide + 2 5'-deoxyadenosine + 2 L-methionine + 2 reduced [2Fe-2S]-[ferredoxin]. It functions in the pathway protein modification; protein lipoylation via endogenous pathway; protein N(6)-(lipoyl)lysine from octanoyl-[acyl-carrier-protein]: step 2/2. Catalyzes the radical-mediated insertion of two sulfur atoms into the C-6 and C-8 positions of the octanoyl moiety bound to the lipoyl domains of lipoate-dependent enzymes, thereby converting the octanoylated domains into lipoylated derivatives. This Streptomyces avermitilis (strain ATCC 31267 / DSM 46492 / JCM 5070 / NBRC 14893 / NCIMB 12804 / NRRL 8165 / MA-4680) protein is Lipoyl synthase.